A 217-amino-acid chain; its full sequence is 3,4-dihydroxy-2-butanone 4-phosphate synthase (217 aa).

D-ribulose 5-phosphate contacts are provided by residues 37 to 38 (RE), D42, 150 to 154 (RRGHT), and E174. E38 serves as a coordination point for Mg(2+). H153 contacts Mg(2+).

It belongs to the DHBP synthase family. In terms of assembly, homodimer. Mg(2+) serves as cofactor. The cofactor is Mn(2+).

The catalysed reaction is D-ribulose 5-phosphate = (2S)-2-hydroxy-3-oxobutyl phosphate + formate + H(+). The protein operates within cofactor biosynthesis; riboflavin biosynthesis; 2-hydroxy-3-oxobutyl phosphate from D-ribulose 5-phosphate: step 1/1. In terms of biological role, catalyzes the conversion of D-ribulose 5-phosphate to formate and 3,4-dihydroxy-2-butanone 4-phosphate. This is 3,4-dihydroxy-2-butanone 4-phosphate synthase from Shewanella baltica (strain OS155 / ATCC BAA-1091).